The following is a 370-amino-acid chain: Ganglioside-induced differentiation-associated protein 1-like 1 (370 aa).

A GST N-terminal domain is found at 45-129; that stretch reads ESLVLYHWTQ…YVERTFTGEH (85 aa). Residues 177-344 form the GST C-terminal domain; that stretch reads PKYATAEIRR…RLVKRKPPSF (168 aa).

It belongs to the GST superfamily.

The protein is Ganglioside-induced differentiation-associated protein 1-like 1 (Gdap1l1) of Mus musculus (Mouse).